Consider the following 251-residue polypeptide: Transcriptional regulator CBF1 (251 aa).

The disordered stretch occupies residues 1–169 (MVKSHKRTLE…VERKRRESIN (169 aa)). The span at 7–28 (RTLEKDEEHQEKKKANKISKDD) shows a compositional bias: basic and acidic residues. The span at 40-56 (ASDSAHTDTATAAVAAV) shows a compositional bias: low complexity. Residues 67-76 (TESSTNQTSA) are compositionally biased toward polar residues. The segment covering 77–105 (LDKDDKETKDNLNPREETQSSHQEIDIPK) has biased composition (basic and acidic residues). The segment covering 107–116 (QLTNQQNLAD) has biased composition (polar residues). Low complexity predominate over residues 117-126 (QHQQYQYHQQ). Residues 127–140 (LAQTNFKTEPTNSA) show a composition bias toward polar residues. Residues 144 to 167 (HGSEEWHRQRRENHKEVERKRRES) show a composition bias toward basic and acidic residues. The bHLH domain maps to 152–200 (QRRENHKEVERKRRESINTGIRELARLIPTTDTNKAQILQRAVEYIKRL). The stretch at 190 to 223 (LQRAVEYIKRLKENENNNIEKWTLEKLLTEQAVS) forms a coiled coil.

It localises to the nucleus. Transcription factor that binds ribosomal protein gene promoters and rDNA locus with TBF1. Necessary for the expression of genes involved in assimilation of inorganic sulfate. Also required for the expression of respiratory genes and glycolytic genes. Does not bind to centromeres and is not necessary for efficient chromosome segregationas as does S.cerevisiae CBF1. In Candida albicans (strain SC5314 / ATCC MYA-2876) (Yeast), this protein is Transcriptional regulator CBF1 (CBF1).